The chain runs to 628 residues: Alpha-L-arabinofuranosidase A (628 aa).

The first 25 residues, 1–25, serve as a signal peptide directing secretion; sequence MVAFSALSGVSAVSLLLSLVQNAHG. Residues Asn36, Asn51, Asn74, Asn152, Asn171, Asn260, Asn359, Asn440, Asn493, and Asn610 are each glycosylated (N-linked (GlcNAc...) asparagine).

The protein belongs to the glycosyl hydrolase 51 family.

The catalysed reaction is Hydrolysis of terminal non-reducing alpha-L-arabinofuranoside residues in alpha-L-arabinosides.. Its pathway is glycan metabolism; L-arabinan degradation. Functionally, acts only on small linear 1,5-alpha-linked L-arabinofuranosyl oligosaccharides. In Aspergillus niger, this protein is Alpha-L-arabinofuranosidase A (abfA).